A 941-amino-acid polypeptide reads, in one-letter code: Endoglucanase (941 aa).

The first 29 residues, 1 to 29 (MKIKQIKQSLSLLLIITLIMSLFVPMASA), serve as a signal peptide directing secretion. SLH domains are found at residues 37-94 (NAFP…GLEA), 95-158 (SSKD…LSLP), and 161-224 (QREY…DYLY). Residue Glu373 is the Proton donor of the active site. Residue Glu485 is the Nucleophile of the active site.

This sequence belongs to the glycosyl hydrolase 5 (cellulase A) family.

The catalysed reaction is Endohydrolysis of (1-&gt;4)-beta-D-glucosidic linkages in cellulose, lichenin and cereal beta-D-glucans.. This is Endoglucanase from Bacillus sp. (strain KSM-635).